Here is a 71-residue protein sequence, read N- to C-terminus: Large ribosomal subunit protein bL31 (71 aa).

Zn(2+)-binding residues include Cys16, Cys18, Cys37, and Cys40.

The protein belongs to the bacterial ribosomal protein bL31 family. Type A subfamily. Part of the 50S ribosomal subunit. Requires Zn(2+) as cofactor.

Functionally, binds the 23S rRNA. This Nitratidesulfovibrio vulgaris (strain ATCC 29579 / DSM 644 / CCUG 34227 / NCIMB 8303 / VKM B-1760 / Hildenborough) (Desulfovibrio vulgaris) protein is Large ribosomal subunit protein bL31.